The primary structure comprises 460 residues: Argininosuccinate lyase (460 aa).

The protein belongs to the lyase 1 family. Argininosuccinate lyase subfamily.

The protein resides in the cytoplasm. The catalysed reaction is 2-(N(omega)-L-arginino)succinate = fumarate + L-arginine. The protein operates within amino-acid biosynthesis; L-arginine biosynthesis; L-arginine from L-ornithine and carbamoyl phosphate: step 3/3. The protein is Argininosuccinate lyase of Oleidesulfovibrio alaskensis (strain ATCC BAA-1058 / DSM 17464 / G20) (Desulfovibrio alaskensis).